A 355-amino-acid polypeptide reads, in one-letter code: MGPGRCLLTALLLLALAPPPEASQYCGRLEYWNPDNKCCSSCLQRFGPPPCPDYEFRENCGLNDHGDFVTPPFRKCSSGQCNPDGAELCSPCGGGAVTPTPAAGGGRTPWRCRERPVPAKGHCPLTPGNPGAPSSQERSSPASSIAWRTPEPVPQQAWPNFLPLVVLVLLLTLAVIAILLFILLWHLCWPKEKADPYPYPGLVCGVPNTHTPSSSHLSSPGALETGDTWKEASLLPLLSRELSSLASQPLSRLLDELEVLEELIVLLDPEPGPGGGMAHGTTRHLAARYGLPAAWSTFAYSLRPSRSPLRALIEMVVAREPSASLGQLGTHLAQLGRADALRVLSKLGSSGVCWA.

The first 22 residues, 1 to 22, serve as a signal peptide directing secretion; that stretch reads MGPGRCLLTALLLLALAPPPEA. Residues 23–163 lie on the Extracellular side of the membrane; that stretch reads SQYCGRLEYW…PQQAWPNFLP (141 aa). A disordered region spans residues 120–147; sequence KGHCPLTPGNPGAPSSQERSSPASSIAW. Over residues 132–144 the composition is skewed to low complexity; it reads APSSQERSSPASS. The helical transmembrane segment at 164 to 184 threads the bilayer; sequence LVVLVLLLTLAVIAILLFILL. Over 185–355 the chain is Cytoplasmic; the sequence is WHLCWPKEKA…KLGSSGVCWA (171 aa).

It is found in the cell membrane. Its function is as follows. Probable cell membrane receptor for the IGF-like family proteins. Binds IGFL1 and IGFL3 with a higher affinity. May also bind IGFL2. The sequence is that of IGF-like family receptor 1 (IGFLR1) from Homo sapiens (Human).